Here is a 619-residue protein sequence, read N- to C-terminus: Dihydroxy-acid dehydratase (619 aa).

Mg(2+) is bound at residue Asp-81. Position 122 (Cys-122) interacts with [2Fe-2S] cluster. Mg(2+)-binding residues include Asp-123 and Lys-124. At Lys-124 the chain carries N6-carboxylysine. Cys-195 provides a ligand contact to [2Fe-2S] cluster. Position 491 (Glu-491) interacts with Mg(2+). Ser-517 acts as the Proton acceptor in catalysis.

This sequence belongs to the IlvD/Edd family. In terms of assembly, homodimer. It depends on [2Fe-2S] cluster as a cofactor. Requires Mg(2+) as cofactor.

It catalyses the reaction (2R)-2,3-dihydroxy-3-methylbutanoate = 3-methyl-2-oxobutanoate + H2O. The enzyme catalyses (2R,3R)-2,3-dihydroxy-3-methylpentanoate = (S)-3-methyl-2-oxopentanoate + H2O. It participates in amino-acid biosynthesis; L-isoleucine biosynthesis; L-isoleucine from 2-oxobutanoate: step 3/4. It functions in the pathway amino-acid biosynthesis; L-valine biosynthesis; L-valine from pyruvate: step 3/4. Functionally, functions in the biosynthesis of branched-chain amino acids. Catalyzes the dehydration of (2R,3R)-2,3-dihydroxy-3-methylpentanoate (2,3-dihydroxy-3-methylvalerate) into 2-oxo-3-methylpentanoate (2-oxo-3-methylvalerate) and of (2R)-2,3-dihydroxy-3-methylbutanoate (2,3-dihydroxyisovalerate) into 2-oxo-3-methylbutanoate (2-oxoisovalerate), the penultimate precursor to L-isoleucine and L-valine, respectively. In Rhodopseudomonas palustris (strain HaA2), this protein is Dihydroxy-acid dehydratase.